The chain runs to 273 residues: Large ribosomal subunit protein uL2 (273 aa).

Residues 221–263 form a disordered region; that stretch reads RGTAMNPVDHPHGGGEGRNFGKHPVTPWGVQTKGKKTRHNKRT. Over residues 253-263 the composition is skewed to basic residues; sequence KGKKTRHNKRT.

Belongs to the universal ribosomal protein uL2 family. As to quaternary structure, part of the 50S ribosomal subunit. Forms a bridge to the 30S subunit in the 70S ribosome.

Functionally, one of the primary rRNA binding proteins. Required for association of the 30S and 50S subunits to form the 70S ribosome, for tRNA binding and peptide bond formation. It has been suggested to have peptidyltransferase activity; this is somewhat controversial. Makes several contacts with the 16S rRNA in the 70S ribosome. The polypeptide is Large ribosomal subunit protein uL2 (Actinobacillus succinogenes (strain ATCC 55618 / DSM 22257 / CCUG 43843 / 130Z)).